We begin with the raw amino-acid sequence, 642 residues long: 1-deoxy-D-xylulose-5-phosphate synthase 2 (642 aa).

Residues H73 and 113-115 each bind thiamine diphosphate; that span reads SHA. A Mg(2+)-binding site is contributed by D144. Thiamine diphosphate-binding positions include 145–146, N174, Y285, and E366; that span reads GA. Residue N174 coordinates Mg(2+).

This sequence belongs to the transketolase family. DXPS subfamily. As to quaternary structure, homodimer. Mg(2+) serves as cofactor. Requires thiamine diphosphate as cofactor.

The enzyme catalyses D-glyceraldehyde 3-phosphate + pyruvate + H(+) = 1-deoxy-D-xylulose 5-phosphate + CO2. It participates in metabolic intermediate biosynthesis; 1-deoxy-D-xylulose 5-phosphate biosynthesis; 1-deoxy-D-xylulose 5-phosphate from D-glyceraldehyde 3-phosphate and pyruvate: step 1/1. Functionally, catalyzes the acyloin condensation reaction between C atoms 2 and 3 of pyruvate and glyceraldehyde 3-phosphate to yield 1-deoxy-D-xylulose-5-phosphate (DXP). The protein is 1-deoxy-D-xylulose-5-phosphate synthase 2 of Streptomyces coelicolor (strain ATCC BAA-471 / A3(2) / M145).